Reading from the N-terminus, the 445-residue chain is Tryptamine benzoyltransferase 1 (445 aa).

Catalysis depends on proton acceptor residues histidine 150 and aspartate 382.

The protein belongs to the plant acyltransferase family.

Hydroxycinnamoyl transferase that catalyzes the transfer of an acyl from benzoyl-CoA to tryptamine, to produce benzoyl tryptamine. Serotonin and tyramine serve as acyl acceptors in vitro. Can use p-coumaroyl-CoA, and to a lesser extent caffeoyl-CoA, as acyl donors. This Oryza sativa subsp. japonica (Rice) protein is Tryptamine benzoyltransferase 1.